The following is a 427-amino-acid chain: Histidine--tRNA ligase (427 aa).

It belongs to the class-II aminoacyl-tRNA synthetase family. As to quaternary structure, homodimer.

It localises to the cytoplasm. It carries out the reaction tRNA(His) + L-histidine + ATP = L-histidyl-tRNA(His) + AMP + diphosphate + H(+). The sequence is that of Histidine--tRNA ligase from Proteus mirabilis (strain HI4320).